A 495-amino-acid chain; its full sequence is ATP synthase subunit beta, chloroplastic (495 aa).

172 to 179 (GGAGVGKT) contributes to the ATP binding site.

Belongs to the ATPase alpha/beta chains family. In terms of assembly, F-type ATPases have 2 components, CF(1) - the catalytic core - and CF(0) - the membrane proton channel. CF(1) has five subunits: alpha(3), beta(3), gamma(1), delta(1), epsilon(1). CF(0) has four main subunits: a(1), b(1), b'(1) and c(9-12).

The protein resides in the plastid. Its subcellular location is the chloroplast thylakoid membrane. The catalysed reaction is ATP + H2O + 4 H(+)(in) = ADP + phosphate + 5 H(+)(out). Its function is as follows. Produces ATP from ADP in the presence of a proton gradient across the membrane. The catalytic sites are hosted primarily by the beta subunits. In Convallaria majalis (Lily of the valley), this protein is ATP synthase subunit beta, chloroplastic.